We begin with the raw amino-acid sequence, 86 residues long: Small ribosomal subunit protein uS17 (86 aa).

Belongs to the universal ribosomal protein uS17 family. As to quaternary structure, part of the 30S ribosomal subunit.

In terms of biological role, one of the primary rRNA binding proteins, it binds specifically to the 5'-end of 16S ribosomal RNA. In Dehalococcoides mccartyi (strain ATCC BAA-2266 / KCTC 15142 / 195) (Dehalococcoides ethenogenes (strain 195)), this protein is Small ribosomal subunit protein uS17.